Consider the following 120-residue polypeptide: Large ribosomal subunit protein uL18 (120 aa).

Belongs to the universal ribosomal protein uL18 family. As to quaternary structure, part of the 50S ribosomal subunit; part of the 5S rRNA/L5/L18/L25 subcomplex. Contacts the 5S and 23S rRNAs.

Its function is as follows. This is one of the proteins that bind and probably mediate the attachment of the 5S RNA into the large ribosomal subunit, where it forms part of the central protuberance. The polypeptide is Large ribosomal subunit protein uL18 (Clostridium novyi (strain NT)).